The sequence spans 634 residues: Chaperone protein DnaK (634 aa).

Position 193 is a phosphothreonine; by autocatalysis (threonine 193). The interval 597–634 (GNANNTSSTESTTTNNNNEEDSKVVDSDYQEIDKKDGK) is disordered. Residues 600–613 (NNTSSTESTTTNNN) are compositionally biased toward low complexity. Basic and acidic residues predominate over residues 616–634 (EDSKVVDSDYQEIDKKDGK).

Belongs to the heat shock protein 70 family.

Acts as a chaperone. This is Chaperone protein DnaK from Ehrlichia canis (strain Jake).